A 479-amino-acid polypeptide reads, in one-letter code: Glutamyl-tRNA(Gln) amidotransferase subunit A (479 aa).

Catalysis depends on charge relay system residues lysine 75 and serine 150. Serine 174 serves as the catalytic Acyl-ester intermediate.

It belongs to the amidase family. GatA subfamily. As to quaternary structure, heterotrimer of A, B and C subunits.

It carries out the reaction L-glutamyl-tRNA(Gln) + L-glutamine + ATP + H2O = L-glutaminyl-tRNA(Gln) + L-glutamate + ADP + phosphate + H(+). Allows the formation of correctly charged Gln-tRNA(Gln) through the transamidation of misacylated Glu-tRNA(Gln) in organisms which lack glutaminyl-tRNA synthetase. The reaction takes place in the presence of glutamine and ATP through an activated gamma-phospho-Glu-tRNA(Gln). The chain is Glutamyl-tRNA(Gln) amidotransferase subunit A from Synechococcus sp. (strain ATCC 27144 / PCC 6301 / SAUG 1402/1) (Anacystis nidulans).